Consider the following 95-residue polypeptide: CRISPR-associated endoribonuclease Cas2 3 (95 aa).

Residue D7 coordinates Mg(2+).

The protein belongs to the CRISPR-associated endoribonuclease Cas2 protein family. In terms of assembly, homodimer, forms a heterotetramer with a Cas1 homodimer. Requires Mg(2+) as cofactor.

Its function is as follows. CRISPR (clustered regularly interspaced short palindromic repeat), is an adaptive immune system that provides protection against mobile genetic elements (viruses, transposable elements and conjugative plasmids). CRISPR clusters contain sequences complementary to antecedent mobile elements and target invading nucleic acids. CRISPR clusters are transcribed and processed into CRISPR RNA (crRNA). Functions as a ssRNA-specific endoribonuclease. Involved in the integration of spacer DNA into the CRISPR cassette. This chain is CRISPR-associated endoribonuclease Cas2 3, found in Rhodospirillum rubrum (strain ATCC 11170 / ATH 1.1.1 / DSM 467 / LMG 4362 / NCIMB 8255 / S1).